The following is a 259-amino-acid chain: Phosphatidylglycerol--prolipoprotein diacylglyceryl transferase (259 aa).

A run of 4 helical transmembrane segments spans residues 10-30 (IGLLEIRWYSLAYIIGILFAY), 50-70 (IISWWVTGMILGGRIGYILFY), 86-106 (WKGGMSFHGASLGLFCTMYIF), and 112-132 (IKFLSAIDLCLCAVPVGIFLG). R133 contacts a 1,2-diacyl-sn-glycero-3-phospho-(1'-sn-glycerol). Transmembrane regions (helical) follow at residues 169–189 (LYEAFFEGLLLFVVMNLLFFF), 197–217 (GMLFSIFMIWYGIVRFFIEFV), and 227–247 (ILFNWITMGQLLSFIMVILGI).

The protein belongs to the Lgt family.

It is found in the cell inner membrane. It carries out the reaction L-cysteinyl-[prolipoprotein] + a 1,2-diacyl-sn-glycero-3-phospho-(1'-sn-glycerol) = an S-1,2-diacyl-sn-glyceryl-L-cysteinyl-[prolipoprotein] + sn-glycerol 1-phosphate + H(+). It participates in protein modification; lipoprotein biosynthesis (diacylglyceryl transfer). Its function is as follows. Catalyzes the transfer of the diacylglyceryl group from phosphatidylglycerol to the sulfhydryl group of the N-terminal cysteine of a prolipoprotein, the first step in the formation of mature lipoproteins. This Ehrlichia ruminantium (strain Welgevonden) protein is Phosphatidylglycerol--prolipoprotein diacylglyceryl transferase.